The chain runs to 121 residues: Large ribosomal subunit protein uL22 (121 aa).

The protein belongs to the universal ribosomal protein uL22 family. In terms of assembly, part of the 50S ribosomal subunit.

This protein binds specifically to 23S rRNA; its binding is stimulated by other ribosomal proteins, e.g. L4, L17, and L20. It is important during the early stages of 50S assembly. It makes multiple contacts with different domains of the 23S rRNA in the assembled 50S subunit and ribosome. In terms of biological role, the globular domain of the protein is located near the polypeptide exit tunnel on the outside of the subunit, while an extended beta-hairpin is found that lines the wall of the exit tunnel in the center of the 70S ribosome. The sequence is that of Large ribosomal subunit protein uL22 from Synechococcus sp. (strain CC9311).